The sequence spans 20 residues: Dahlein-5.1 (20 aa).

Expressed by the skin dorsal glands.

It is found in the secreted. In terms of biological role, has no antimicrobial activity. Strongly inhibits the formation of NO by neuronal nitric oxide synthase at micromolar concentrations. Acts by a non-competitive mechanism, probably by binding to calcium/calmodulin and as a consequence blocking calmodulin attachment to nNOS. The protein is Dahlein-5.1 of Ranoidea dahlii (Dahl's aquatic frog).